A 159-amino-acid polypeptide reads, in one-letter code: Nutritionally-regulated adipose and cardiac-enriched protein homolog (159 aa).

Positions 1 to 67 are disordered; the sequence is MKTAVHALSP…GDEPRRTTRH (67 aa). Basic and acidic residues-rich tracts occupy residues 12–25 and 50–63; these read SRPE…KNEE and SPQE…EPRR. Residues 107–124 form a helical membrane-spanning segment; sequence LTACILLALALGMCCGQA.

It is found in the cell membrane. The protein is Nutritionally-regulated adipose and cardiac-enriched protein homolog (NRAC) of Bos taurus (Bovine).